Here is a 465-residue protein sequence, read N- to C-terminus: 5-cytosine rRNA methyltransferase nsun-4 (465 aa).

Residues 1–6 (MSCLRQ) constitute a mitochondrion transit peptide. Residues 106 to 130 (QAIETKRKSVEEKANRETQKVKHEI) show a composition bias toward basic and acidic residues. The interval 106 to 145 (QAIETKRKSVEEKANRETQKVKHEISNPSTSTNTEDSEPD) is disordered. S-adenosyl-L-methionine is bound by residues 260-266 (CAAPGGK), Asp283, Asp316, and Asp335. The active-site Nucleophile is the Cys390.

This sequence belongs to the class I-like SAM-binding methyltransferase superfamily. RsmB/NOP family.

The protein resides in the mitochondrion. It carries out the reaction a cytidine in rRNA + S-adenosyl-L-methionine = a 5-methylcytidine in rRNA + S-adenosyl-L-homocysteine + H(+). It catalyses the reaction a cytidine in tRNA + S-adenosyl-L-methionine = a 5-methylcytidine in tRNA + S-adenosyl-L-homocysteine + H(+). Functionally, mitochondrial methyltransferase which methylates cytosine to 5-methylcytosine (m5C) in rRNAs and tRNAs at multiple sites. May play a role in the translation of leucine and proline codons. This is 5-cytosine rRNA methyltransferase nsun-4 from Caenorhabditis elegans.